A 102-amino-acid polypeptide reads, in one-letter code: ATP-dependent Clp protease adapter protein ClpS (102 aa).

This sequence belongs to the ClpS family. As to quaternary structure, binds to the N-terminal domain of the chaperone ClpA.

Its function is as follows. Involved in the modulation of the specificity of the ClpAP-mediated ATP-dependent protein degradation. This is ATP-dependent Clp protease adapter protein ClpS from Nitrosospira multiformis (strain ATCC 25196 / NCIMB 11849 / C 71).